Consider the following 516-residue polypeptide: Probable D,D-dipeptide-binding periplasmic protein DdpA (516 aa).

The N-terminal stretch at 1 to 25 (MKRSISFRPTLLALVLATNFPVAHA) is a signal peptide.

The protein belongs to the bacterial solute-binding protein 5 family. As to quaternary structure, the complex is composed of two ATP-binding proteins (DdpD and DdpF), two transmembrane proteins (DdpB and DdpC) and a solute-binding protein (DdpA).

Its subcellular location is the periplasm. In terms of biological role, part of the ABC transporter complex DdpABCDF, which is probably involved in D,D-dipeptide transport. The polypeptide is Probable D,D-dipeptide-binding periplasmic protein DdpA (ddpA) (Escherichia coli (strain K12)).